The following is an 85-amino-acid chain: Insecticidal toxin Vn1 (85 aa).

The signal sequence occupies residues 1–23; sequence MFLYRLICLFILICIITVDISTS. A disulfide bridge connects residues Cys71 and Cys84.

Highly expressed in the venom apparatus, and weakly expressed in residual body.

It localises to the secreted. Functionally, endoparasitoid venom toxin that exhibits insecticidal activity against Tenebrio molitor pupae. Impacts genes related to immune response, environmental information processing, metabolism, and response to external stimuli in T.molitor, suggesting its involvement in the intricate parasitoid wasp-host interaction. This chain is Insecticidal toxin Vn1, found in Aphidius gifuensis (Parasitoid wasp).